The sequence spans 203 residues: NADH-quinone oxidoreductase subunit C (203 aa).

The protein belongs to the complex I 30 kDa subunit family. NDH-1 is composed of 14 different subunits. Subunits NuoB, C, D, E, F, and G constitute the peripheral sector of the complex.

It is found in the cell inner membrane. The enzyme catalyses a quinone + NADH + 5 H(+)(in) = a quinol + NAD(+) + 4 H(+)(out). Functionally, NDH-1 shuttles electrons from NADH, via FMN and iron-sulfur (Fe-S) centers, to quinones in the respiratory chain. The immediate electron acceptor for the enzyme in this species is believed to be ubiquinone. Couples the redox reaction to proton translocation (for every two electrons transferred, four hydrogen ions are translocated across the cytoplasmic membrane), and thus conserves the redox energy in a proton gradient. The protein is NADH-quinone oxidoreductase subunit C of Delftia acidovorans (strain DSM 14801 / SPH-1).